The following is a 283-amino-acid chain: Protein FAM78A (283 aa).

This sequence belongs to the FAM78 family.

This chain is Protein FAM78A (Fam78a), found in Mus musculus (Mouse).